The following is a 562-amino-acid chain: Putative transport protein ETA_21820 (562 aa).

Helical transmembrane passes span 8-28 (LLIGNHILLLFVVLALGLCLG), 32-52 (LGSVQLGNSIGVLVVSLLLGQ), 66-86 (FMLFIFCVGVEAGPNFFSIFF), 94-114 (MLAIVMVSSAMVLALGLGKLF), and 158-178 (HLSLGYALTYLVGLVSLIFGA). 2 consecutive RCK C-terminal domains span residues 202–288 (LDPD…SFRN) and 290–373 (KEVF…RIGF). Transmembrane regions (helical) follow at residues 383–403 (LLAFCAFFILGLMIGMITFQF), 406–426 (FNFGIGNAAGLLFAGIMLGFL), 440–460 (ALTMVKEFGLMVFMAGVGLSA), 473–493 (LLMLGAGLIVSLVPVVICFLF), 503–523 (ALLFGAIMGARTCAPAMEIIS), and 540–560 (AIANVLLTLAGTLIVIIWPIL).

Belongs to the AAE transporter (TC 2.A.81) family. YbjL subfamily.

Its subcellular location is the cell membrane. The protein is Putative transport protein ETA_21820 of Erwinia tasmaniensis (strain DSM 17950 / CFBP 7177 / CIP 109463 / NCPPB 4357 / Et1/99).